The primary structure comprises 167 residues: Phosphopantetheine adenylyltransferase (167 aa).

Residue Ser-11 coordinates substrate. ATP-binding positions include 11-12 (SF) and His-19. The substrate site is built by Lys-43, Thr-76, and Arg-90. ATP contacts are provided by residues 91-93 (GIR), Glu-101, and 126-132 (YDALSST).

Belongs to the bacterial CoaD family. Homohexamer. Requires Mg(2+) as cofactor.

The protein localises to the cytoplasm. It carries out the reaction (R)-4'-phosphopantetheine + ATP + H(+) = 3'-dephospho-CoA + diphosphate. It functions in the pathway cofactor biosynthesis; coenzyme A biosynthesis; CoA from (R)-pantothenate: step 4/5. In terms of biological role, reversibly transfers an adenylyl group from ATP to 4'-phosphopantetheine, yielding dephospho-CoA (dPCoA) and pyrophosphate. This chain is Phosphopantetheine adenylyltransferase, found in Lacticaseibacillus paracasei (strain ATCC 334 / BCRC 17002 / CCUG 31169 / CIP 107868 / KCTC 3260 / NRRL B-441) (Lactobacillus paracasei).